The following is a 65-amino-acid chain: UPF0434 protein BQ10150 (65 aa).

The protein belongs to the UPF0434 family.

The protein is UPF0434 protein BQ10150 of Bartonella quintana (strain Toulouse) (Rochalimaea quintana).